We begin with the raw amino-acid sequence, 362 residues long: Chorismate synthase (362 aa).

NADP(+)-binding residues include arginine 48 and arginine 54. Residues 125 to 127 (RSS), 238 to 239 (NA), glycine 286, 301 to 305 (KPTSS), and arginine 327 contribute to the FMN site.

The protein belongs to the chorismate synthase family. In terms of assembly, homotetramer. FMNH2 is required as a cofactor.

The enzyme catalyses 5-O-(1-carboxyvinyl)-3-phosphoshikimate = chorismate + phosphate. It participates in metabolic intermediate biosynthesis; chorismate biosynthesis; chorismate from D-erythrose 4-phosphate and phosphoenolpyruvate: step 7/7. Catalyzes the anti-1,4-elimination of the C-3 phosphate and the C-6 proR hydrogen from 5-enolpyruvylshikimate-3-phosphate (EPSP) to yield chorismate, which is the branch point compound that serves as the starting substrate for the three terminal pathways of aromatic amino acid biosynthesis. This reaction introduces a second double bond into the aromatic ring system. The polypeptide is Chorismate synthase (Granulibacter bethesdensis (strain ATCC BAA-1260 / CGDNIH1)).